A 183-amino-acid polypeptide reads, in one-letter code: Probable chemoreceptor glutamine deamidase CheD (183 aa).

Belongs to the CheD family.

The enzyme catalyses L-glutaminyl-[protein] + H2O = L-glutamyl-[protein] + NH4(+). Functionally, probably deamidates glutamine residues to glutamate on methyl-accepting chemotaxis receptors (MCPs), playing an important role in chemotaxis. The protein is Probable chemoreceptor glutamine deamidase CheD of Rhizobium meliloti (strain 1021) (Ensifer meliloti).